The chain runs to 458 residues: Transcription factor ORF10 (458 aa).

Residues 38 to 65 constitute a DNA-binding region (zn(2)-C6 fungal-type); sequence CESCRLKKLRCSGHKSGCDRCRSQAMKC. Residues 69-109 form a disordered region; it reads IGAPSNSSRPKSRSHFQPNFSNMSGTAGTSKAPSPLGNDGV. The segment covering 71–100 has biased composition (polar residues); the sequence is APSNSSRPKSRSHFQPNFSNMSGTAGTSKA.

The protein resides in the nucleus. Its function is as follows. Transcription factor that specifically regulates the expression of the gene cluster that mediates the biosynthesis of PR-toxin, a bicyclic sesquiterpene belonging to the eremophilane class and acting as a mycotoxin. This Penicillium roqueforti (strain FM164) protein is Transcription factor ORF10.